The sequence spans 1368 residues: DNA-directed RNA polymerase subunit beta (1368 aa).

This sequence belongs to the RNA polymerase beta chain family. The RNAP catalytic core consists of 2 alpha, 1 beta, 1 beta' and 1 omega subunit. When a sigma factor is associated with the core the holoenzyme is formed, which can initiate transcription.

It catalyses the reaction RNA(n) + a ribonucleoside 5'-triphosphate = RNA(n+1) + diphosphate. Its function is as follows. DNA-dependent RNA polymerase catalyzes the transcription of DNA into RNA using the four ribonucleoside triphosphates as substrates. This chain is DNA-directed RNA polymerase subunit beta, found in Cupriavidus taiwanensis (strain DSM 17343 / BCRC 17206 / CCUG 44338 / CIP 107171 / LMG 19424 / R1) (Ralstonia taiwanensis (strain LMG 19424)).